The primary structure comprises 159 residues: Phosphopantetheine adenylyltransferase (159 aa).

Serine 9 contributes to the substrate binding site. ATP-binding positions include 9–10 (SF) and histidine 17. The substrate site is built by lysine 41, isoleucine 73, and lysine 87. Residues 88–90 (GLR), glutamate 98, and 122–128 (WGYVSSS) contribute to the ATP site.

This sequence belongs to the bacterial CoaD family. Homohexamer. The cofactor is Mg(2+).

It is found in the cytoplasm. It carries out the reaction (R)-4'-phosphopantetheine + ATP + H(+) = 3'-dephospho-CoA + diphosphate. It participates in cofactor biosynthesis; coenzyme A biosynthesis; CoA from (R)-pantothenate: step 4/5. In terms of biological role, reversibly transfers an adenylyl group from ATP to 4'-phosphopantetheine, yielding dephospho-CoA (dPCoA) and pyrophosphate. The sequence is that of Phosphopantetheine adenylyltransferase from Nocardioides sp. (strain ATCC BAA-499 / JS614).